The primary structure comprises 177 residues: EDLANVSAPQVVVFDPSEAEINKTQKATLVCLAKDFYPDHVELSWWVNGKEVHNGVSTDPQPYKQDPKSDHSKYCLSSRLRVSAAFWHNPRNHFRCQVQFFGLTDDDEWTYNSSKPITQNISAHTRGRADCGISSASYQQGVLSATVLYEILLGKATLYAVLVSALVLMAMVKRKDS.

The interval Glu1–Glu150 is c region. N-linked (GlcNAc...) asparagine glycosylation is found at Asn5 and Asn22. Cys31 and Cys96 form a disulfide bridge. Residues Thr146 to Leu168 form a helical membrane-spanning segment. The Cytoplasmic segment spans residues Met169 to Ser177.

The protein resides in the membrane. The sequence is that of T-cell receptor beta chain C region from Oryctolagus cuniculus (Rabbit).